The sequence spans 615 residues: Putative HPr kinase/phosphorylase (615 aa).

480-487 lines the ATP pocket; the sequence is GKSGIGKS.

The protein belongs to the HPrK/P family.

It carries out the reaction [HPr protein]-L-serine + ATP = [HPr protein]-O-phospho-L-serine + ADP + H(+). The catalysed reaction is [HPr protein]-O-phospho-L-serine + phosphate + H(+) = [HPr protein]-L-serine + diphosphate. Functionally, catalyzes the ATP- as well as the pyrophosphate-dependent phosphorylation of a specific serine residue in HPr, a phosphocarrier protein of the phosphoenolpyruvate-dependent sugar phosphotransferase system (PTS). HprK/P also catalyzes the pyrophosphate-producing, inorganic phosphate-dependent dephosphorylation (phosphorolysis) of seryl-phosphorylated HPr (P-Ser-HPr). This chain is Putative HPr kinase/phosphorylase (hprK), found in Fusobacterium nucleatum subsp. nucleatum (strain ATCC 25586 / DSM 15643 / BCRC 10681 / CIP 101130 / JCM 8532 / KCTC 2640 / LMG 13131 / VPI 4355).